A 100-amino-acid polypeptide reads, in one-letter code: NADH-quinone oxidoreductase subunit K (100 aa).

3 consecutive transmembrane segments (helical) span residues 4–24, 29–49, and 60–80; these read LSWY…GFVI, IVML…FASF, and IFVL…LAIV.

The protein belongs to the complex I subunit 4L family. As to quaternary structure, NDH-1 is composed of 14 different subunits. Subunits NuoA, H, J, K, L, M, N constitute the membrane sector of the complex.

Its subcellular location is the cell inner membrane. The enzyme catalyses a quinone + NADH + 5 H(+)(in) = a quinol + NAD(+) + 4 H(+)(out). Functionally, NDH-1 shuttles electrons from NADH, via FMN and iron-sulfur (Fe-S) centers, to quinones in the respiratory chain. The immediate electron acceptor for the enzyme in this species is believed to be ubiquinone. Couples the redox reaction to proton translocation (for every two electrons transferred, four hydrogen ions are translocated across the cytoplasmic membrane), and thus conserves the redox energy in a proton gradient. The sequence is that of NADH-quinone oxidoreductase subunit K from Thermodesulfovibrio yellowstonii (strain ATCC 51303 / DSM 11347 / YP87).